Consider the following 255-residue polypeptide: Diphthine--ammonia ligase (255 aa).

This sequence belongs to the Diphthine--ammonia ligase family.

It catalyses the reaction diphthine-[translation elongation factor 2] + NH4(+) + ATP = diphthamide-[translation elongation factor 2] + AMP + diphosphate + H(+). The protein operates within protein modification; peptidyl-diphthamide biosynthesis. Functionally, amidase that catalyzes the last step of diphthamide biosynthesis using ammonium and ATP. Diphthamide biosynthesis consists in the conversion of an L-histidine residue in the translation elongation factor eEF-2 (EEF2) to diphthamide. The protein is Diphthine--ammonia ligase (dph6) of Danio rerio (Zebrafish).